Here is a 621-residue protein sequence, read N- to C-terminus: tRNA uridine 5-carboxymethylaminomethyl modification enzyme MnmG (621 aa).

Residue 9–14 (GGGHAG) coordinates FAD. 270–284 (GPRYCPSIEDKIVKF) lines the NAD(+) pocket.

The protein belongs to the MnmG family. Homodimer. Heterotetramer of two MnmE and two MnmG subunits. It depends on FAD as a cofactor.

It localises to the cytoplasm. Functionally, NAD-binding protein involved in the addition of a carboxymethylaminomethyl (cmnm) group at the wobble position (U34) of certain tRNAs, forming tRNA-cmnm(5)s(2)U34. The polypeptide is tRNA uridine 5-carboxymethylaminomethyl modification enzyme MnmG (Borrelia garinii subsp. bavariensis (strain ATCC BAA-2496 / DSM 23469 / PBi) (Borreliella bavariensis)).